A 569-amino-acid polypeptide reads, in one-letter code: Sulfite reductase [NADPH] hemoprotein beta-component (569 aa).

[4Fe-4S] cluster contacts are provided by C433, C439, C478, and C482. Residue C482 coordinates siroheme.

It belongs to the nitrite and sulfite reductase 4Fe-4S domain family. As to quaternary structure, alpha(8)-beta(8). The alpha component is a flavoprotein, the beta component is a hemoprotein. Siroheme serves as cofactor. The cofactor is [4Fe-4S] cluster.

The enzyme catalyses hydrogen sulfide + 3 NADP(+) + 3 H2O = sulfite + 3 NADPH + 4 H(+). It participates in sulfur metabolism; hydrogen sulfide biosynthesis; hydrogen sulfide from sulfite (NADPH route): step 1/1. Component of the sulfite reductase complex that catalyzes the 6-electron reduction of sulfite to sulfide. This is one of several activities required for the biosynthesis of L-cysteine from sulfate. The polypeptide is Sulfite reductase [NADPH] hemoprotein beta-component (Blochmanniella floridana).